The chain runs to 593 residues: Glutamyl-tRNA(Gln) amidotransferase subunit B, mitochondrial (593 aa).

A mitochondrion-targeting transit peptide spans 1 to 49; sequence MLRPWLRQSTRAARSLPCCQCPRPYSSRLPTLTSPSSSVRRLQTSASES. Over residues 27–42 the composition is skewed to low complexity; the sequence is SRLPTLTSPSSSVRRL. The tract at residues 27 to 80 is disordered; that stretch reads SRLPTLTSPSSSVRRLQTSASESQDRVPLRKQLKQNAKALKAEKRQRRESEEAS. Positions 66-80 are enriched in basic and acidic residues; that stretch reads LKAEKRQRRESEEAS.

Belongs to the GatB/GatE family. GatB subfamily. In terms of assembly, subunit of the heterotrimeric GatCAB amidotransferase (AdT) complex, composed of A, B and C subunits.

Its subcellular location is the mitochondrion. The enzyme catalyses L-glutamyl-tRNA(Gln) + L-glutamine + ATP + H2O = L-glutaminyl-tRNA(Gln) + L-glutamate + ADP + phosphate + H(+). Its function is as follows. Allows the formation of correctly charged Gln-tRNA(Gln) through the transamidation of misacylated Glu-tRNA(Gln) in the mitochondria. The reaction takes place in the presence of glutamine and ATP through an activated gamma-phospho-Glu-tRNA(Gln). The polypeptide is Glutamyl-tRNA(Gln) amidotransferase subunit B, mitochondrial (Aspergillus oryzae (strain ATCC 42149 / RIB 40) (Yellow koji mold)).